The sequence spans 299 residues: Protein charybde (299 aa).

The segment at 73-103 is disordered; sequence LNTRPSATPPSAGGGGPLAGGGSVGMTTPKQ. Gly residues predominate over residues 84–96; sequence AGGGGPLAGGGSV.

It belongs to the DDIT4 family.

The protein localises to the cytoplasm. Its function is as follows. Inhibits cell growth by regulating the Tor pathway upstream of the Tsc1-Tsc2 complex and downstream of Akt1. Acts as a cell death activator during head development. The chain is Protein charybde (chrb) from Drosophila melanogaster (Fruit fly).